A 140-amino-acid polypeptide reads, in one-letter code: Profilin-1 (140 aa).

A2 carries the N-acetylalanine modification. A Phosphoserine modification is found at S28. K54 participates in a covalent cross-link: Glycyl lysine isopeptide (Lys-Gly) (interchain with G-Cter in SUMO2); alternate. K54 is covalently cross-linked (Glycyl lysine isopeptide (Lys-Gly) (interchain with G-Cter in ubiquitin); alternate). S57 is subject to Phosphoserine. K108 is subject to N6-acetyllysine. Y129 is modified (phosphotyrosine). S138 bears the Phosphoserine; by ROCK1 mark.

This sequence belongs to the profilin family. Found in a complex with XPO6, Ran, ACTB and PFN1. Interacts with ACTB. Interacts with VASP. Interacts with HTT. Interacts with SH3BGRL. Occurs in many kinds of cells as a complex with monomeric actin in a 1:1 ratio. Interacts with ACTMAP. Phosphorylation at Ser-138 reduces its affinity for G-actin and blocks its interaction with HTT, reducing its ability to inhibit androgen receptor (AR) and HTT aggregation.

The protein localises to the cytoplasm. Its subcellular location is the cytoskeleton. Its function is as follows. Binds to actin and affects the structure of the cytoskeleton. At high concentrations, profilin prevents the polymerization of actin, whereas it enhances it at low concentrations. By binding to PIP2, it inhibits the formation of IP3 and DG. Inhibits androgen receptor (AR) and HTT aggregation and binding of G-actin is essential for its inhibition of AR. This is Profilin-1 (Pfn1) from Mus musculus (Mouse).